A 103-amino-acid chain; its full sequence is Enhancer of rudimentary homolog (103 aa).

It belongs to the E(R) family. As to quaternary structure, homodimer.

Functionally, may have a role in the cell cycle. The polypeptide is Enhancer of rudimentary homolog (Aedes aegypti (Yellowfever mosquito)).